Here is a 480-residue protein sequence, read N- to C-terminus: Aspartyl/glutamyl-tRNA(Asn/Gln) amidotransferase subunit B (480 aa).

The protein belongs to the GatB/GatE family. GatB subfamily. In terms of assembly, heterotrimer of A, B and C subunits.

It carries out the reaction L-glutamyl-tRNA(Gln) + L-glutamine + ATP + H2O = L-glutaminyl-tRNA(Gln) + L-glutamate + ADP + phosphate + H(+). It catalyses the reaction L-aspartyl-tRNA(Asn) + L-glutamine + ATP + H2O = L-asparaginyl-tRNA(Asn) + L-glutamate + ADP + phosphate + 2 H(+). In terms of biological role, allows the formation of correctly charged Asn-tRNA(Asn) or Gln-tRNA(Gln) through the transamidation of misacylated Asp-tRNA(Asn) or Glu-tRNA(Gln) in organisms which lack either or both of asparaginyl-tRNA or glutaminyl-tRNA synthetases. The reaction takes place in the presence of glutamine and ATP through an activated phospho-Asp-tRNA(Asn) or phospho-Glu-tRNA(Gln). In Streptococcus pneumoniae (strain 70585), this protein is Aspartyl/glutamyl-tRNA(Asn/Gln) amidotransferase subunit B.